Consider the following 245-residue polypeptide: Biosynthetic peptidoglycan transglycosylase (245 aa).

The helical transmembrane segment at 10–30 threads the bilayer; sequence FLALLFVVATLAQLWYLGQVL. Residues 224-245 form a disordered region; it reads DPGTVPLPPPPEPTAPPEGNTQ. A compositionally biased stretch (pro residues) spans 226–239; it reads GTVPLPPPPEPTAP.

The protein belongs to the glycosyltransferase 51 family.

The protein resides in the cell inner membrane. The catalysed reaction is [GlcNAc-(1-&gt;4)-Mur2Ac(oyl-L-Ala-gamma-D-Glu-L-Lys-D-Ala-D-Ala)](n)-di-trans,octa-cis-undecaprenyl diphosphate + beta-D-GlcNAc-(1-&gt;4)-Mur2Ac(oyl-L-Ala-gamma-D-Glu-L-Lys-D-Ala-D-Ala)-di-trans,octa-cis-undecaprenyl diphosphate = [GlcNAc-(1-&gt;4)-Mur2Ac(oyl-L-Ala-gamma-D-Glu-L-Lys-D-Ala-D-Ala)](n+1)-di-trans,octa-cis-undecaprenyl diphosphate + di-trans,octa-cis-undecaprenyl diphosphate + H(+). It participates in cell wall biogenesis; peptidoglycan biosynthesis. Peptidoglycan polymerase that catalyzes glycan chain elongation from lipid-linked precursors. The sequence is that of Biosynthetic peptidoglycan transglycosylase from Alcanivorax borkumensis (strain ATCC 700651 / DSM 11573 / NCIMB 13689 / SK2).